Consider the following 305-residue polypeptide: Serine/threonine-protein kinase 16 (305 aa).

G2 carries the N-myristoyl glycine lipid modification. Residues C6 and C8 are each lipidated (S-palmitoyl cysteine). In terms of domain architecture, Protein kinase spans 20–293 (YLFVQKLGEG…PVLLSQLEAL (274 aa)). Residues 26 to 34 (LGEGGFSYV) and K49 each bind ATP. The active-site Proton acceptor is the D148. The tract at residues 166 to 202 (DLGSMNQACIQVEGSRQALALQDWAAQRCTISYRAPE) is activation loop. S197 bears the Phosphoserine; by autocatalysis mark. The residue at position 198 (Y198) is a Phosphotyrosine; by autocatalysis.

Belongs to the protein kinase superfamily. Ser/Thr protein kinase family. Monomer. Interacts with DRG1 (via its N-terminal); the interaction phosphorylates DRG1. Mainly autophosphorylated on serine/threonine residues. Also autophosphorylated on Tyr-198. Ubiquitously expressed at low levels. Relatively higher levels in testis, kidney and liver.

The protein localises to the cytoplasm. It localises to the perinuclear region. Its subcellular location is the membrane. It catalyses the reaction L-seryl-[protein] + ATP = O-phospho-L-seryl-[protein] + ADP + H(+). The enzyme catalyses L-threonyl-[protein] + ATP = O-phospho-L-threonyl-[protein] + ADP + H(+). The catalysed reaction is L-tyrosyl-[protein] + ATP = O-phospho-L-tyrosyl-[protein] + ADP + H(+). Membrane-associated protein kinase that phosphorylates on serine and threonine residues. In vitro substrates include DRG1, ENO1 and EIF4EBP1. Also autophosphorylates. May be involved in secretory vesicle trafficking or intracellular signaling. May have a role in regulating stromal-epithelial interactions that occur during ductal morphogenesis in the mammary gland. May be involved in TGF-beta signaling. Able to autophosphorylate on Tyr residue; it is however unclear whether it has tyrosine-protein kinase toward other proteins. This is Serine/threonine-protein kinase 16 (Stk16) from Mus musculus (Mouse).